We begin with the raw amino-acid sequence, 333 residues long: Nucleoid-associated protein VC0395_A1624/VC395_2154 (333 aa).

It belongs to the YejK family.

It is found in the cytoplasm. The protein resides in the nucleoid. The sequence is that of Nucleoid-associated protein VC0395_A1624/VC395_2154 from Vibrio cholerae serotype O1 (strain ATCC 39541 / Classical Ogawa 395 / O395).